Here is a 247-residue protein sequence, read N- to C-terminus: V-type proton ATPase subunit D (247 aa).

Belongs to the V-ATPase D subunit family. V-ATPase is a heteromultimeric enzyme made up of two complexes: the ATP-hydrolytic V1 complex and the proton translocation V0 complex. The V1 complex consists of three catalytic AB heterodimers that form a heterohexamer, three peripheral stalks each consisting of EG heterodimers, one central rotor including subunits D and F, and the regulatory subunits C and H. The proton translocation complex V0 consists of the proton transport subunit a, a ring of proteolipid subunits c9c'', rotary subunit d, subunits e and f, and the accessory subunits ATP6AP1/Ac45 and ATP6AP2/PRR. Interacts with SNX10.

The protein resides in the membrane. It is found in the cytoplasmic vesicle. Its subcellular location is the clathrin-coated vesicle membrane. The protein localises to the cytoplasm. It localises to the cytoskeleton. The protein resides in the microtubule organizing center. It is found in the centrosome. Its subcellular location is the cell projection. The protein localises to the cilium. Its function is as follows. Subunit of the V1 complex of vacuolar(H+)-ATPase (V-ATPase), a multisubunit enzyme composed of a peripheral complex (V1) that hydrolyzes ATP and a membrane integral complex (V0) that translocates protons. V-ATPase is responsible for acidifying and maintaining the pH of intracellular compartments and in some cell types, is targeted to the plasma membrane, where it is responsible for acidifying the extracellular environment. May play a role in cilium biogenesis through regulation of the transport and the localization of proteins to the cilium. This Mus musculus (Mouse) protein is V-type proton ATPase subunit D (Atp6v1d).